A 237-amino-acid chain; its full sequence is Protein PetR (237 aa).

The region spanning 8 to 121 is the Response regulatory domain; the sequence is HLLIVDDDER…ELLLRINAIL (114 aa). Aspartate 57 bears the 4-aspartylphosphate mark. Positions 77-95 form a DNA-binding region, H-T-H motif; the sequence is ATPILLLTARGETRERIEG. The ompR/PhoB-type DNA-binding region spans 132 to 236; it reads PKYLSLGPLR…VRGLGYMLAP (105 aa).

Necessary for photosynthetic and respiratory growth. Probable promoter-specific protein mediating the interaction between DNA and RNA polymerase. This is Protein PetR (petR) from Rhodobacter capsulatus (strain ATCC BAA-309 / NBRC 16581 / SB1003).